A 501-amino-acid chain; its full sequence is Phosphatidylinositol 4-kinase type 2-beta (501 aa).

Disordered regions lie at residues 1–30 (MMAE…SSEV) and 65–122 (TELE…NHFP). Residues 17–27 (GDSTPETNFLS) show a composition bias toward polar residues. Low complexity predominate over residues 76 to 88 (ALLLPGPAGSLSP). The span at 99-117 (NMLSSSSDNLASPGNSSGE) shows a compositional bias: polar residues. Residues 141 to 471 (GVFPERISQG…VQMPRVVVER (331 aa)) enclose the PI3K/PI4K catalytic domain. A G-loop region spans residues 147-153 (ISQGSSG). Positions 154 and 169 each coordinate ATP. The segment at 174–176 (EPY) is important for substrate binding. Residues 182–195 (KWTKYFHKVCCPCC) form an important for interaction with membranes region. ATP is bound by residues 278-281 (QLFV) and 292-293 (RK). Residues 285-293 (HEADFWLRK) form an important for interaction with membranes region. Positions 322 to 330 (RNTDRGNDN) are catalytic loop. The tract at residues 362–382 (AIDNGLAFPFKHPDEWRAYPF) is activation loop. Position 364 (D364) interacts with ATP. The interval 377–386 (WRAYPFHWAW) is important for interaction with membranes.

The protein belongs to the PI3/PI4-kinase family. Type II PI4K subfamily.

Its subcellular location is the cytoplasm. The protein localises to the cytosol. The protein resides in the golgi apparatus membrane. It localises to the endoplasmic reticulum membrane. It is found in the cell membrane. Its subcellular location is the early endosome membrane. It catalyses the reaction a 1,2-diacyl-sn-glycero-3-phospho-(1D-myo-inositol) + ATP = a 1,2-diacyl-sn-glycero-3-phospho-(1D-myo-inositol 4-phosphate) + ADP + H(+). In terms of biological role, contributes to the overall PI4-kinase activity of the cell. This contribution may be especially significant in plasma membrane, endosomal and Golgi compartments. The phosphorylation of phosphatidylinositol (PI) to PI4P is the first committed step in the generation of phosphatidylinositol 4,5-bisphosphate (PIP2), a precursor of the second messenger inositol 1,4,5-trisphosphate (InsP3). The protein is Phosphatidylinositol 4-kinase type 2-beta (pi4k2b) of Danio rerio (Zebrafish).